We begin with the raw amino-acid sequence, 165 residues long: Large ribosomal subunit protein uL10 (165 aa).

This sequence belongs to the universal ribosomal protein uL10 family. Part of the ribosomal stalk of the 50S ribosomal subunit. The N-terminus interacts with L11 and the large rRNA to form the base of the stalk. The C-terminus forms an elongated spine to which L12 dimers bind in a sequential fashion forming a multimeric L10(L12)X complex.

In terms of biological role, forms part of the ribosomal stalk, playing a central role in the interaction of the ribosome with GTP-bound translation factors. The protein is Large ribosomal subunit protein uL10 of Buchnera aphidicola subsp. Acyrthosiphon pisum (strain 5A).